Consider the following 312-residue polypeptide: Ribonuclease H2 subunit B (312 aa).

Alanine 2 carries the N-acetylalanine modification. A disordered region spans residues 236–256 (EPSASLPNPPSKKIKLSDEPV). Position 295 is an N6-acetyllysine (lysine 295). Serine 296 carries the post-translational modification Phosphoserine.

It belongs to the RNase H2 subunit B family. The RNase H2 complex is a heterotrimer composed of the catalytic subunit RNASEH2A and the non-catalytic subunits RNASEH2B and RNASEH2C. Widely expressed.

Its subcellular location is the nucleus. Non catalytic subunit of RNase H2, an endonuclease that specifically degrades the RNA of RNA:DNA hybrids. Participates in DNA replication, possibly by mediating the removal of lagging-strand Okazaki fragment RNA primers during DNA replication. Mediates the excision of single ribonucleotides from DNA:RNA duplexes. This is Ribonuclease H2 subunit B (RNASEH2B) from Homo sapiens (Human).